The primary structure comprises 626 residues: 1-deoxy-D-xylulose-5-phosphate synthase 2 (626 aa).

Thiamine diphosphate contacts are provided by residues His74 and 115–117 (GHA). Asp146 is a binding site for Mg(2+). Thiamine diphosphate is bound by residues 147–148 (GS), Asn175, Phe286, and Glu368. A Mg(2+)-binding site is contributed by Asn175.

The protein belongs to the transketolase family. DXPS subfamily. As to quaternary structure, homodimer. The cofactor is Mg(2+). Thiamine diphosphate serves as cofactor.

The enzyme catalyses D-glyceraldehyde 3-phosphate + pyruvate + H(+) = 1-deoxy-D-xylulose 5-phosphate + CO2. It participates in metabolic intermediate biosynthesis; 1-deoxy-D-xylulose 5-phosphate biosynthesis; 1-deoxy-D-xylulose 5-phosphate from D-glyceraldehyde 3-phosphate and pyruvate: step 1/1. In terms of biological role, catalyzes the acyloin condensation reaction between C atoms 2 and 3 of pyruvate and glyceraldehyde 3-phosphate to yield 1-deoxy-D-xylulose-5-phosphate (DXP). The protein is 1-deoxy-D-xylulose-5-phosphate synthase 2 of Geobacter sulfurreducens (strain ATCC 51573 / DSM 12127 / PCA).